The sequence spans 137 residues: Nucleoside diphosphate kinase (137 aa).

Lys-10, Phe-59, Arg-87, Thr-93, Arg-104, and Asn-114 together coordinate ATP. The active-site Pros-phosphohistidine intermediate is His-117.

The protein belongs to the NDK family. In terms of assembly, homotetramer. Mg(2+) serves as cofactor.

It is found in the cytoplasm. The catalysed reaction is a 2'-deoxyribonucleoside 5'-diphosphate + ATP = a 2'-deoxyribonucleoside 5'-triphosphate + ADP. It carries out the reaction a ribonucleoside 5'-diphosphate + ATP = a ribonucleoside 5'-triphosphate + ADP. Functionally, major role in the synthesis of nucleoside triphosphates other than ATP. The ATP gamma phosphate is transferred to the NDP beta phosphate via a ping-pong mechanism, using a phosphorylated active-site intermediate. The sequence is that of Nucleoside diphosphate kinase from Streptomyces griseus subsp. griseus (strain JCM 4626 / CBS 651.72 / NBRC 13350 / KCC S-0626 / ISP 5235).